The chain runs to 2103 residues: Zinc finger SWIM domain-containing protein 8 homolog (2103 aa).

The SWIM-type zinc-finger motif lies at 191–227; that stretch reads FNVAVTFDRRRISSCNCTCTSSAYWCSHVVAVCLHRI. Disordered stretches follow at residues 684 to 860, 1237 to 1262, 1310 to 1399, 1735 to 1772, 1786 to 1864, and 1888 to 1916; these read DGNR…GSTA, SSNP…GGSG, SSGS…IPNQ, MQMF…QVVQ, QQVQ…GVGV, and PFMQ…RQPH. Residues 724 to 740 show a composition bias toward polar residues; that stretch reads SALTESDSQSSFDAVSH. 2 stretches are compositionally biased toward low complexity: residues 754–789 and 835–857; these read AVGV…STSS and GRVA…VGSG. Residues 1237-1249 show a composition bias toward polar residues; it reads SSNPPVRTRSNQP. The segment covering 1320-1351 has biased composition (low complexity); it reads GMVPTTNAAGTTGTPSSSSTTVSGSQNPNGNP. Over residues 1352 to 1377 the composition is skewed to gly residues; that stretch reads SGSGGGGNGGGGNGGGGGGGGGGGGS. Pro residues predominate over residues 1755-1764; sequence QPPPQQPPNP. Low complexity-rich tracts occupy residues 1786–1813 and 1820–1835; these read QQVQ…SGFQ and AFQA…MQAG. Composition is skewed to pro residues over residues 1836–1859 and 1894–1908; these read PPGP…PNGP and PPQP…PSQP.

The protein belongs to the ZSWIM8 family. In terms of assembly, component of the SCF-like E3 ubiquitin-protein ligase complex.

Its pathway is protein modification; protein ubiquitination. In terms of biological role, substrate recognition component of a SCF-like E3 ubiquitin-protein ligase complex that promotes target-directed microRNA degradation (TDMD), a process that mediates degradation of microRNAs (miRNAs). The SCF-like E3 ubiquitin-protein ligase complex acts by catalyzing ubiquitination and subsequent degradation of AGO1, thereby exposing miRNAs for degradation. This Drosophila melanogaster (Fruit fly) protein is Zinc finger SWIM domain-containing protein 8 homolog.